The following is a 151-amino-acid chain: Small ribosomal subunit protein uS13m (151 aa).

The protein belongs to the universal ribosomal protein uS13 family. As to quaternary structure, component of the mitochondrial small ribosomal subunit (mt-SSU). Mature yeast 74S mitochondrial ribosomes consist of a small (37S) and a large (54S) subunit. The 37S small subunit contains a 15S ribosomal RNA (15S mt-rRNA) and at least 32 different proteins. The 54S large subunit contains a 21S rRNA (21S mt-rRNA) and at least 45 different proteins.

It is found in the mitochondrion. Component of the mitochondrial ribosome (mitoribosome), a dedicated translation machinery responsible for the synthesis of mitochondrial genome-encoded proteins, including at least some of the essential transmembrane subunits of the mitochondrial respiratory chain. The mitoribosomes are attached to the mitochondrial inner membrane and translation products are cotranslationally integrated into the membrane. The polypeptide is Small ribosomal subunit protein uS13m (sws2) (Schizosaccharomyces pombe (strain 972 / ATCC 24843) (Fission yeast)).